Here is a 578-residue protein sequence, read N- to C-terminus: GRAM domain-containing protein 4 (578 aa).

A coiled-coil region spans residues His83–Arg135. The interval Ala132 to Gln157 is disordered. Residues Ser139–Ala154 are compositionally biased toward polar residues. A run of 3 helical transmembrane segments spans residues Ile236–Phe256, Met334–Tyr354, and Thr356–Phe376. In terms of domain architecture, GRAM spans Ser446–Lys524.

It localises to the mitochondrion membrane. It is found in the endoplasmic reticulum membrane. In terms of biological role, plays a role as a mediator of e2f1-induced apoptosis in the absence of p53/TP53. This Xenopus laevis (African clawed frog) protein is GRAM domain-containing protein 4 (gramd4).